Here is an 82-residue protein sequence, read N- to C-terminus: Small ribosomal subunit protein bS18 (82 aa).

The interval 1–20 is disordered; it reads MVDINQIPTRRPFHRRRKTC.

Belongs to the bacterial ribosomal protein bS18 family. In terms of assembly, part of the 30S ribosomal subunit. Forms a tight heterodimer with protein bS6.

Its function is as follows. Binds as a heterodimer with protein bS6 to the central domain of the 16S rRNA, where it helps stabilize the platform of the 30S subunit. In Brucella abortus (strain 2308), this protein is Small ribosomal subunit protein bS18.